We begin with the raw amino-acid sequence, 1028 residues long: MRLLWKLVILLPLINSCAGESRFTRPIFIQEPQDVIFPLDLSRSEIILSCTASGYPSPHYRWKQNGTDIDFSMTYHYRLDGGSLAISSPRTDQDIGIYQCLATNPVGTILSRKAKLQFAYIEDFETKSRSTVSVREGQGVVLLCGPPPHFGELSYDWTFNDNPLYVQEDKRRFVSQNTGNLYIAKVEPSDVGNYTCFVTNKEAHRSVQGPPTPLVQRTDGVMGEYEPKIEVRFPETIQAAKDSSVKLECFALGNPVPDISWRRLDGSPMPGKVKYSNSQATLEIPKFQQEDEGFYECVAGNLRGRNLAKGQLIFYAPPEWEQKIQNTYLSIYDSLFWECKASGNPNPSYTWLKNGERLNTEERIQTENGTLIITMLNVSDSGIYQCAAENKYQTIYANAELRVLASAPDFSKNPIKKISVVQVGGDISIECKPNAFPKASISWKRGTENLKQSKRVFFLEDGSLKICNVTRSDAGSYTCVATNQFGNGKSSGSLIVKERTVITVPPSKMDVTVGESIVLPCQVSHDPTMEVLFVWYFNGDVIDLKKGVAHFERIGGESVGDLMIRNIQLGHSGKYLCTVQTTLERLSAVADIIVRGPPGPPEDVKVEHISSTTSQLSWRPGPDNNSPIQIFTIQTRTPFSVGWQAVATVPEILNGQTYNATVIGLSPWVEYEFRVVAGNNIGIGEPSKPSELLRTKASIPNVAPVNINGGGGSRSELVITWEPIPEELQNGEGFGYIIMFRPVGSTTWMKEKVALVESSKFIYRNESIMPLSPFEVKVGVYNNEGEGSLSTVSIVYSGEDEPRLAPRGTSVQSFSASDMEVSWNAIAWNRNTGRVLGYEVLYWTDNSKESMIGKIRVSGNVTTKNITGLRANTIYFASVRAYNTAGTGPSSPPVNVTTKKSPPSQPPANIAWKLSNSKLCLNWEHVKTMENESEVLGYKILYRQNRQSKTHVLETNNTSAELLVPFEEDYLIEIRTVSDGGDGSSSEEIRIPKMSSLSSVGVQILKPSTQFLTMVGFFYCFVIQPLSR.

The N-terminal stretch at 1-19 (MRLLWKLVILLPLINSCAG) is a signal peptide. 6 Ig-like C2-type domains span residues 32–117 (PQDV…AKLQ), 122–208 (EDFE…RSVQ), 227–308 (PKIE…RNLA), 318–402 (PEWE…AELR), 408–495 (PDFS…GSLI), and 499–587 (RTVI…ERLS). Disulfide bonds link Cys50–Cys100, Cys144–Cys196, Cys249–Cys297, Cys339–Cys386, Cys431–Cys479, and Cys521–Cys577. Asn65 and Asn193 each carry an N-linked (GlcNAc...) asparagine glycan. Residues Asn368, Asn377, and Asn468 are each glycosylated (N-linked (GlcNAc...) asparagine). 4 Fibronectin type-III domains span residues 600 to 698 (PPED…TKAS), 703 to 800 (APVN…SGED), 805 to 901 (APRG…TKKS), and 902 to 996 (PPSQ…KMSS). Residues Asn659, Asn765, Asn860, and Asn865 are each glycosylated (N-linked (GlcNAc...) asparagine). Tyr882 is modified (phosphotyrosine). A compositionally biased stretch (polar residues) spans 887 to 902 (TGPSSPPVNVTTKKSP). Residues 887-908 (TGPSSPPVNVTTKKSPPSQPPA) form a disordered region. 4 N-linked (GlcNAc...) asparagine glycosylation sites follow: Asn895, Asn931, Asn956, and Asn957. A lipid anchor (GPI-anchor amidated serine) is attached at Ser999. The propeptide at 1000–1028 (VGVQILKPSTQFLTMVGFFYCFVIQPLSR) is removed in mature form.

Belongs to the immunoglobulin superfamily. Contactin family. Interacts with PTPRG. As to expression, specifically expressed in neuronal cells. In brain, it is expressed in spinal cord, cerebrum and cerebellum. At 17 dpc, it is expressed in hippocampus, cerebellum, and the brain stem. Strongly expressed after birth with a maximum level between P1 and P21, which corresponds to the time frame of oligodendrogliogenesis.

The protein localises to the cell membrane. Contactins mediate cell surface interactions during nervous system development. Participates in oligodendrocytes generation by acting as a ligand of NOTCH1. Its association with NOTCH1 promotes NOTCH1 activation through the released notch intracellular domain (NICD) and subsequent translocation to the nucleus. May be involved in motor coordination. The sequence is that of Contactin-6 (Cntn6) from Rattus norvegicus (Rat).